A 307-amino-acid chain; its full sequence is Acetaldehyde dehydrogenase (307 aa).

Position 12-15 (12-15 (SGNI)) interacts with NAD(+). The active-site Acyl-thioester intermediate is the Cys-130. NAD(+) is bound by residues 161-169 (SVGPGTRQN) and Asn-272.

Belongs to the acetaldehyde dehydrogenase family.

The enzyme catalyses acetaldehyde + NAD(+) + CoA = acetyl-CoA + NADH + H(+). The sequence is that of Acetaldehyde dehydrogenase from Shewanella pealeana (strain ATCC 700345 / ANG-SQ1).